The chain runs to 450 residues: Exodeoxyribonuclease 7 large subunit (450 aa).

Belongs to the XseA family. In terms of assembly, heterooligomer composed of large and small subunits.

The protein resides in the cytoplasm. It catalyses the reaction Exonucleolytic cleavage in either 5'- to 3'- or 3'- to 5'-direction to yield nucleoside 5'-phosphates.. Bidirectionally degrades single-stranded DNA into large acid-insoluble oligonucleotides, which are then degraded further into small acid-soluble oligonucleotides. This Shewanella frigidimarina (strain NCIMB 400) protein is Exodeoxyribonuclease 7 large subunit.